The following is a 431-amino-acid chain: tRNA(Ile)-lysidine synthase (431 aa).

26 to 31 (SGGVDS) provides a ligand contact to ATP.

The protein belongs to the tRNA(Ile)-lysidine synthase family.

It is found in the cytoplasm. It catalyses the reaction cytidine(34) in tRNA(Ile2) + L-lysine + ATP = lysidine(34) in tRNA(Ile2) + AMP + diphosphate + H(+). Functionally, ligates lysine onto the cytidine present at position 34 of the AUA codon-specific tRNA(Ile) that contains the anticodon CAU, in an ATP-dependent manner. Cytidine is converted to lysidine, thus changing the amino acid specificity of the tRNA from methionine to isoleucine. In Wolbachia pipientis wMel, this protein is tRNA(Ile)-lysidine synthase.